The chain runs to 591 residues: Aspartate--tRNA ligase (591 aa).

E175 contacts L-aspartate. Residues 199–202 are aspartate; the sequence is QLFK. R221 is an L-aspartate binding site. ATP is bound by residues 221 to 223 and Q230; that span reads RDE. H449 is a binding site for L-aspartate. E483 is an ATP binding site. R490 is a binding site for L-aspartate. 535–538 is an ATP binding site; it reads GLDR.

It belongs to the class-II aminoacyl-tRNA synthetase family. Type 1 subfamily. As to quaternary structure, homodimer.

The protein localises to the cytoplasm. It carries out the reaction tRNA(Asp) + L-aspartate + ATP = L-aspartyl-tRNA(Asp) + AMP + diphosphate. Functionally, catalyzes the attachment of L-aspartate to tRNA(Asp) in a two-step reaction: L-aspartate is first activated by ATP to form Asp-AMP and then transferred to the acceptor end of tRNA(Asp). In Oceanobacillus iheyensis (strain DSM 14371 / CIP 107618 / JCM 11309 / KCTC 3954 / HTE831), this protein is Aspartate--tRNA ligase.